A 204-amino-acid polypeptide reads, in one-letter code: Holliday junction branch migration complex subunit RuvA (204 aa).

The interval 1–64 (MIGRLQGKLI…EDAHLLFGFS (64 aa)) is domain I. The segment at 65 to 143 (TKTDRTLFRE…GLRQPDFFVE (79 aa)) is domain II. The flexible linker stretch occupies residues 144–155 (SKHITVPDIVSA). The interval 156-204 (EKETPNDEAVAALVALGYKPPEAAKMVKKVANGDLTSEQLIREALKAAL) is domain III.

Belongs to the RuvA family. As to quaternary structure, homotetramer. Forms an RuvA(8)-RuvB(12)-Holliday junction (HJ) complex. HJ DNA is sandwiched between 2 RuvA tetramers; dsDNA enters through RuvA and exits via RuvB. An RuvB hexamer assembles on each DNA strand where it exits the tetramer. Each RuvB hexamer is contacted by two RuvA subunits (via domain III) on 2 adjacent RuvB subunits; this complex drives branch migration. In the full resolvosome a probable DNA-RuvA(4)-RuvB(12)-RuvC(2) complex forms which resolves the HJ.

It localises to the cytoplasm. The RuvA-RuvB-RuvC complex processes Holliday junction (HJ) DNA during genetic recombination and DNA repair, while the RuvA-RuvB complex plays an important role in the rescue of blocked DNA replication forks via replication fork reversal (RFR). RuvA specifically binds to HJ cruciform DNA, conferring on it an open structure. The RuvB hexamer acts as an ATP-dependent pump, pulling dsDNA into and through the RuvAB complex. HJ branch migration allows RuvC to scan DNA until it finds its consensus sequence, where it cleaves and resolves the cruciform DNA. In Actinobacillus succinogenes (strain ATCC 55618 / DSM 22257 / CCUG 43843 / 130Z), this protein is Holliday junction branch migration complex subunit RuvA.